An 89-amino-acid polypeptide reads, in one-letter code: Pyrin domain-containing protein 1 (89 aa).

Residues 1-89 (MGTKREAILK…EEAARLQRAA (89 aa)) enclose the Pyrin domain.

As to quaternary structure, interacts with PYCARD/ASC (via pyrin domain). Phosphorylated. Predominantly expressed in monocytes, macrophages and granulocytes.

Its subcellular location is the cytoplasm. In terms of biological role, associates with PYCARD/ASC and modulates its ability to collaborate with MEFV/pyrin and NLRP3/cryopyrin in NF-kappa-B and pro-caspase-1 activation. Suppresses kinase activity of NF-kappa-B inhibitor kinase (IKK) complex, expression of NF-kappa-B inducible genes and inhibits NF-kappa-B activation by cytokines and LPS. In Homo sapiens (Human), this protein is Pyrin domain-containing protein 1.